The chain runs to 296 residues: MARAIWSGALTFGLVNIPVKLYTAVHQKEVRFHMLHDADGARIQLRRFCSTEEKEVPYEHIVKGYEVSPGRYVTVTREELEAFDPKATRTVEIHDFVELSEIDPAFFEASYYLVPDRSAAKAYRLLGDAMRKAGKVAIATAVLRTRESLCCVRPAAGGALALSTMNRADEIDSPGSLELPEAGEPSSRELQMAEQLVASLSGPFEPERYPDLRRERVLELIERKAEGQAIEAPAAEPAGAEVVSLADALSASLAAARRRGDEHEAPARGERRHAAAAAARTTGRPRAARASRKKRG.

Residues 11 to 187 enclose the Ku domain; the sequence is TFGLVNIPVK…ELPEAGEPSS (177 aa). The disordered stretch occupies residues 254 to 296; sequence AAARRRGDEHEAPARGERRHAAAAAARTTGRPRAARASRKKRG. Residues 258–273 are compositionally biased toward basic and acidic residues; the sequence is RRGDEHEAPARGERRH. Over residues 275–285 the composition is skewed to low complexity; the sequence is AAAAARTTGRP. Residues 286 to 296 are compositionally biased toward basic residues; the sequence is RAARASRKKRG.

This sequence belongs to the prokaryotic Ku family. In terms of assembly, homodimer. Interacts with LigD.

With LigD forms a non-homologous end joining (NHEJ) DNA repair enzyme, which repairs dsDNA breaks with reduced fidelity. Binds linear dsDNA with 5'- and 3'- overhangs but not closed circular dsDNA nor ssDNA. Recruits and stimulates the ligase activity of LigD. The protein is Non-homologous end joining protein Ku of Anaeromyxobacter sp. (strain K).